Reading from the N-terminus, the 277-residue chain is S-formylglutathione hydrolase FrmB (277 aa).

Catalysis depends on charge relay system residues Ser-145, Asp-221, and His-254.

Belongs to the esterase D family.

The enzyme catalyses S-formylglutathione + H2O = formate + glutathione + H(+). In terms of biological role, serine hydrolase involved in the detoxification of formaldehyde. Hydrolyzes S-formylglutathione to glutathione and formate. This is S-formylglutathione hydrolase FrmB (frmB) from Escherichia coli O139:H28 (strain E24377A / ETEC).